The following is an 87-amino-acid chain: UPF0213 protein SYNAS_10430 (87 aa).

One can recognise a GIY-YIG domain in the interval 2-78; that stretch reads SKNYVYILEC…KKMSRAEKLQ (77 aa).

The protein belongs to the UPF0213 family.

This chain is UPF0213 protein SYNAS_10430, found in Syntrophus aciditrophicus (strain SB).